The sequence spans 205 residues: Small ribosomal subunit protein uS4 (205 aa).

Residues 18–49 (NIWGRPKSPVNKREYGPGQHGQRRKGKLSDFG) are disordered. An S4 RNA-binding domain is found at 94–157 (RRLDTVVYRA…KQLALVLEAN (64 aa)).

It belongs to the universal ribosomal protein uS4 family. In terms of assembly, part of the 30S ribosomal subunit. Contacts protein S5. The interaction surface between S4 and S5 is involved in control of translational fidelity.

One of the primary rRNA binding proteins, it binds directly to 16S rRNA where it nucleates assembly of the body of the 30S subunit. Its function is as follows. With S5 and S12 plays an important role in translational accuracy. This is Small ribosomal subunit protein uS4 from Nitrobacter winogradskyi (strain ATCC 25391 / DSM 10237 / CIP 104748 / NCIMB 11846 / Nb-255).